The primary structure comprises 481 residues: MFS transporter eqxG (481 aa).

Over residues 1 to 13 (MATTDPAIAAPDD) the composition is skewed to low complexity. Residues 1–58 (MATTDPAIAAPDDSQLEAGRENIRANVGDALEKPSSSTGTMVDEPTDPNVVDWDGPHD) form a disordered region. Residue asparagine 64 is glycosylated (N-linked (GlcNAc...) asparagine). A helical transmembrane segment spans residues 72 to 92 (LHLVIVSLFTLAANLAATMFA). Asparagine 106 carries an N-linked (GlcNAc...) asparagine glycan. Transmembrane regions (helical) follow at residues 111–131 (AMTVSLYVLGFALGPLLLAPL), 146–166 (FVYVVFTIGCAFSTNVAMFLV), 169–189 (IICGCAASGPMSIGGGTVADL), 201–221 (LFTVGPLLGPSGLIGVATVIF), 276–296 (PIVLLISLYTGILFGLIFLLF), 315–335 (GLAYLGLGIGMILGLVLFSVL), 353–373 (LILMKWLGPITPLGLFIYGWT), 380–400 (WIVPIIGTFVVGFGSLFVVIP), 403–423 (IYLVDAFGAEAAASAMAANLL), and 439–459 (LYVSLGLGWGNSVLGFICLLF).

The protein belongs to the major facilitator superfamily.

The protein localises to the cell membrane. Efflux pump that might be required for efficient secretion of equisetin or other secondary metabolies produced by the equisetin gene cluster. This is MFS transporter eqxG from Fusarium heterosporum.